Consider the following 96-residue polypeptide: Teretoxin Tgu6.1 (96 aa).

The N-terminal stretch at 1-16 (MRPFLVFVLIVSVSLA) is a signal peptide. Positions 17-52 (FSFEDMPNKGGDSVASITADQARGHKRNPLFPFAQR) are excised as a propeptide.

In terms of processing, contains 3 disulfide bonds. In terms of tissue distribution, expressed by the venom duct.

The protein localises to the secreted. In terms of biological role, the recombinant protein causes paralysis to polychaete worms (Nereis virens), the natural prey of terebrid snails. The chain is Teretoxin Tgu6.1 from Terebra guttata (White spotted auger snail).